A 147-amino-acid polypeptide reads, in one-letter code: Peptide methionine sulfoxide reductase MsrB (147 aa).

Residues 8–131 (KEELKKILTE…NSASLKFIPK (124 aa)) enclose the MsrB domain. Residue C120 is the Nucleophile of the active site.

This sequence belongs to the MsrB Met sulfoxide reductase family.

It carries out the reaction L-methionyl-[protein] + [thioredoxin]-disulfide + H2O = L-methionyl-(R)-S-oxide-[protein] + [thioredoxin]-dithiol. This is Peptide methionine sulfoxide reductase MsrB from Clostridium perfringens (strain SM101 / Type A).